Consider the following 356-residue polypeptide: Dihydroorotate dehydrogenase (quinone) (356 aa).

FMN is bound by residues 68–72 (AGFDK) and Thr92. Lys72 is a binding site for substrate. 117-121 (NRMGF) contacts substrate. Residues Asn145 and Asn178 each contribute to the FMN site. Asn178 lines the substrate pocket. Ser181 serves as the catalytic Nucleophile. Position 183 (Asn183) interacts with substrate. Residues Lys214 and Thr242 each contribute to the FMN site. Substrate is bound at residue 243-244 (NT). Residues Gly266, Gly295, and 316 to 317 (YT) each bind FMN.

This sequence belongs to the dihydroorotate dehydrogenase family. Type 2 subfamily. As to quaternary structure, monomer. FMN serves as cofactor.

It is found in the cell membrane. The enzyme catalyses (S)-dihydroorotate + a quinone = orotate + a quinol. The protein operates within pyrimidine metabolism; UMP biosynthesis via de novo pathway; orotate from (S)-dihydroorotate (quinone route): step 1/1. Functionally, catalyzes the conversion of dihydroorotate to orotate with quinone as electron acceptor. The protein is Dihydroorotate dehydrogenase (quinone) of Mycobacterium sp. (strain KMS).